We begin with the raw amino-acid sequence, 366 residues long: Chorismate synthase (366 aa).

2 residues coordinate NADP(+): R48 and R54. Residues 125 to 127 (RSS), 238 to 239 (NA), G278, 293 to 297 (KPTSS), and R319 contribute to the FMN site.

This sequence belongs to the chorismate synthase family. In terms of assembly, homotetramer. FMNH2 is required as a cofactor.

It carries out the reaction 5-O-(1-carboxyvinyl)-3-phosphoshikimate = chorismate + phosphate. It functions in the pathway metabolic intermediate biosynthesis; chorismate biosynthesis; chorismate from D-erythrose 4-phosphate and phosphoenolpyruvate: step 7/7. Catalyzes the anti-1,4-elimination of the C-3 phosphate and the C-6 proR hydrogen from 5-enolpyruvylshikimate-3-phosphate (EPSP) to yield chorismate, which is the branch point compound that serves as the starting substrate for the three terminal pathways of aromatic amino acid biosynthesis. This reaction introduces a second double bond into the aromatic ring system. The polypeptide is Chorismate synthase (Paraburkholderia phymatum (strain DSM 17167 / CIP 108236 / LMG 21445 / STM815) (Burkholderia phymatum)).